We begin with the raw amino-acid sequence, 554 residues long: MSVCVSPLVQATILMTEESLTCPQCPKSFSSTKLLQQHQQMFHTDKSVLLSLKSTDAPVGMDRAFICETCGKAFRFRSNLAEHRSVHTALKPYVCKFCGKSSRLKGNLTKHILKHHKKEQNEAIAKDDIIVKKAPKIVTKDNGPTTNGSTPTTSTATPSVITVSSALASSNGHNNNNNNHAVNNNLRTIKMELEDPDYNLIAKSAPTPVVSKIVATHTVTPRSRPTPKDIKEILETIAPSVGVSETPEEMCLLPKDASSESDRSVLISLGFDFGSTLSLNHQQLQQVVRELKGELSISPDTVQSDHSDDFEQDSPPPMAIANISTVGGEATLAAMIVAATNASGQRGDGTPDSTDTQKGCSPQRELSPESDPSTSSGDSCPSPPKMLHCKECGTLVRKSSHLPIHMTMSHGYPPPLVAAPVEEKPAPEQPVNASSLHNELRVISNAICELKAQQAATPRVEQALTYIDSRVGKLERSLETALNSIYTLVQLQTGMTSSVNRLREDSTKNFSDLKTRMEMSLSPIKPFQQRFSRERSSSSSVERSPSRERSRSPL.

C2H2-type zinc fingers lie at residues 20 to 43, 65 to 87, and 93 to 116; these read LTCP…QMFH, FICE…RSVH, and YVCK…LKHH. Disordered stretches follow at residues 136–158, 298–319, and 342–383; these read KIVT…TATP, SPDT…PPMA, and ASGQ…CPSP. The segment covering 142-158 has biased composition (low complexity); that stretch reads NGPTTNGSTPTTSTATP. Polar residues-rich tracts occupy residues 351-360 and 370-379; these read PDSTDTQKGC and SDPSTSSGDS. Residues 387–410 form a C2H2-type 4 zinc finger; the sequence is LHCKECGTLVRKSSHLPIHMTMSH. The interval 516–554 is disordered; the sequence is RMEMSLSPIKPFQQRFSRERSSSSSVERSPSRERSRSPL. A compositionally biased stretch (basic and acidic residues) spans 544 to 554; sequence SPSRERSRSPL.

Expressed mainly in body wall muscles and ventral cord motoneurons.

The protein localises to the nucleus. It is found in the nucleus speckle. In terms of biological role, plays a role in regulating synaptic function, probably by modulation of endocytosis. May be dispensable in muscle for normal locomotion. May be involved in post-transcriptional mRNA processing, in parallel with unc-75. The sequence is that of Zinc finger protein syd-9 from Caenorhabditis elegans.